Reading from the N-terminus, the 258-residue chain is Phosphate import ATP-binding protein PstB (258 aa).

Residues 5 to 247 enclose the ABC transporter domain; that stretch reads LDLKGVNIYY…EKIFSNPSQK (243 aa). 37–44 is a binding site for ATP; sequence GPSGCGKT.

Belongs to the ABC transporter superfamily. Phosphate importer (TC 3.A.1.7) family. In terms of assembly, the complex is composed of two ATP-binding proteins (PstB), two transmembrane proteins (PstC and PstA) and a solute-binding protein (PstS).

The protein localises to the cell membrane. The enzyme catalyses phosphate(out) + ATP + H2O = ADP + 2 phosphate(in) + H(+). Its function is as follows. Part of the ABC transporter complex PstSACB involved in phosphate import. Responsible for energy coupling to the transport system. This is Phosphate import ATP-binding protein PstB from Mycolicibacterium paratuberculosis (strain ATCC BAA-968 / K-10) (Mycobacterium paratuberculosis).